A 543-amino-acid polypeptide reads, in one-letter code: Cytochrome P450 2U1 (543 aa).

The next 4 helical transmembrane spans lie at 32–52 (PTGGALLLLVLAALLGWSWLW), 58–78 (GIPPGPAPWPVVGNFGFVLLP), 261–281 (VCLNTQLLLVNICSWLYYLPF), and 342–362 (LFYIIGDLFIAGTDTTTNSLL). Position 490 (Cys490) interacts with heme. The helical transmembrane segment at 495–515 (LAKMELFLMFVSLMQSFTFVL) threads the bilayer.

This sequence belongs to the cytochrome P450 family. Heme is required as a cofactor.

The protein localises to the endoplasmic reticulum membrane. It localises to the microsome membrane. It is found in the mitochondrion inner membrane. The enzyme catalyses an omega-methyl-long-chain fatty acid + reduced [NADPH--hemoprotein reductase] + O2 = an omega-hydroxy-long-chain fatty acid + oxidized [NADPH--hemoprotein reductase] + H2O + H(+). The catalysed reaction is (5Z,8Z,11Z,14Z)-eicosatetraenoate + reduced [NADPH--hemoprotein reductase] + O2 = 19-hydroxy-(5Z,8Z,11Z,14Z)-eicosatetraenoate + oxidized [NADPH--hemoprotein reductase] + H2O + H(+). It carries out the reaction (5Z,8Z,11Z,14Z)-eicosatetraenoate + reduced [NADPH--hemoprotein reductase] + O2 = 20-hydroxy-(5Z,8Z,11Z,14Z)-eicosatetraenoate + oxidized [NADPH--hemoprotein reductase] + H2O + H(+). It catalyses the reaction N-[(5Z,8Z,11Z,14Z)-eicosatetraenoyl]-serotonin + reduced [NADPH--hemoprotein reductase] + O2 = 2-oxo-N-[(5Z,8Z,11Z,14Z)-eicosatetraenoyl]-serotonin + oxidized [NADPH--hemoprotein reductase] + H2O + H(+). A cytochrome P450 monooxygenase involved in the metabolism of arachidonic acid and its conjugates. Mechanistically, uses molecular oxygen inserting one oxygen atom into a substrate, and reducing the second into a water molecule, with two electrons provided by NADPH via cytochrome P450 reductase (CPR; NADPH-ferrihemoprotein reductase). Acts as an omega and omega-1 hydroxylase for arachidonic acid and possibly for other long chain fatty acids. May modulate the arachidonic acid signaling pathway and play a role in other fatty acid signaling processes. May down-regulate the biological activities of N-arachidonoyl-serotonin, an endocannabinoid that has anti-nociceptive effects through inhibition of fatty acid amide hydrolase FAAH, TRPV1 receptor and T-type calcium channels. Catalyzes C-2 oxidation of the indole ring of N-arachidonoyl-serotonin forming a less active product 2-oxo-N-arachidonoyl-serotonin. The protein is Cytochrome P450 2U1 (CYP2U1) of Bos taurus (Bovine).